The sequence spans 282 residues: Ribonuclease 3 (282 aa).

Positions 18-141 constitute an RNase III domain; that stretch reads FVAFFKSLNI…LVAAIYEDLG (124 aa). E59 lines the Mg(2+) pocket. The active site involves D63. 2 residues coordinate Mg(2+): D127 and E130. Residue E130 is part of the active site.

Belongs to the ribonuclease III family. As to quaternary structure, homodimer. Mg(2+) serves as cofactor.

Its subcellular location is the cytoplasm. It catalyses the reaction Endonucleolytic cleavage to 5'-phosphomonoester.. Functionally, digests double-stranded RNA. Involved in the processing of primary rRNA transcript to yield the immediate precursors to the large and small rRNAs (23S and 16S). Processes some mRNAs, and tRNAs when they are encoded in the rRNA operon. Processes pre-crRNA and tracrRNA of type II CRISPR loci if present in the organism. The polypeptide is Ribonuclease 3 (Mycoplasmoides pneumoniae (strain ATCC 15531 / DSM 23978 / CIP 103766 / NBRC 14401 / NCTC 10119 / FH) (Mycoplasma pneumoniae)).